A 457-amino-acid chain; its full sequence is Arginine biosynthesis bifunctional protein ArgJ, mitochondrial (457 aa).

Substrate contacts are provided by Thr-184, Lys-213, Thr-224, Glu-312, Asn-452, and Thr-457. The active-site Nucleophile is the Thr-224.

Belongs to the ArgJ family. In terms of assembly, heterodimer of an alpha and a beta chain. In terms of processing, the alpha and beta chains are autoproteolytically processed from a single precursor protein within the mitochondrion.

It is found in the mitochondrion matrix. The catalysed reaction is N(2)-acetyl-L-ornithine + L-glutamate = N-acetyl-L-glutamate + L-ornithine. The enzyme catalyses L-glutamate + acetyl-CoA = N-acetyl-L-glutamate + CoA + H(+). Its pathway is amino-acid biosynthesis; L-arginine biosynthesis; L-ornithine and N-acetyl-L-glutamate from L-glutamate and N(2)-acetyl-L-ornithine (cyclic): step 1/1. It functions in the pathway amino-acid biosynthesis; L-arginine biosynthesis; N(2)-acetyl-L-ornithine from L-glutamate: step 1/4. In terms of biological role, catalyzes two activities which are involved in the cyclic version of arginine biosynthesis: the synthesis of acetylglutamate from glutamate and acetyl-CoA, and of ornithine by transacetylation between acetylornithine and glutamate. The protein is Arginine biosynthesis bifunctional protein ArgJ, mitochondrial of Aspergillus terreus (strain NIH 2624 / FGSC A1156).